A 637-amino-acid polypeptide reads, in one-letter code: 1-deoxy-D-xylulose-5-phosphate synthase (637 aa).

Thiamine diphosphate is bound by residues histidine 76 and alanine 117–serine 119. Position 148 (aspartate 148) interacts with Mg(2+). Residues glycine 149–alanine 150, asparagine 177, tyrosine 287, and glutamate 369 contribute to the thiamine diphosphate site. Residue asparagine 177 participates in Mg(2+) binding.

It belongs to the transketolase family. DXPS subfamily. Homodimer. Mg(2+) is required as a cofactor. Requires thiamine diphosphate as cofactor.

The enzyme catalyses D-glyceraldehyde 3-phosphate + pyruvate + H(+) = 1-deoxy-D-xylulose 5-phosphate + CO2. The protein operates within metabolic intermediate biosynthesis; 1-deoxy-D-xylulose 5-phosphate biosynthesis; 1-deoxy-D-xylulose 5-phosphate from D-glyceraldehyde 3-phosphate and pyruvate: step 1/1. Catalyzes the acyloin condensation reaction between C atoms 2 and 3 of pyruvate and glyceraldehyde 3-phosphate to yield 1-deoxy-D-xylulose-5-phosphate (DXP). The polypeptide is 1-deoxy-D-xylulose-5-phosphate synthase (Pelagibacter ubique (strain HTCC1062)).